The sequence spans 382 residues: V-type proton ATPase subunit C 1 (382 aa).

Thr-2 carries the N-acetylthreonine modification.

This sequence belongs to the V-ATPase C subunit family. In terms of assembly, V-ATPase is a heteromultimeric enzyme made up of two complexes: the ATP-hydrolytic V1 complex and the proton translocation V0 complex. The V1 complex consists of three catalytic AB heterodimers that form a heterohexamer, three peripheral stalks each consisting of EG heterodimers, one central rotor including subunits D and F, and the regulatory subunits C and H. The proton translocation complex V0 consists of the proton transport subunit a, a ring of proteolipid subunits c9c'', rotary subunit d, subunits e and f, and the accessory subunits ATP6AP1/Ac45 and ATP6AP2/PRR. Expressed in brain (at protein level).

It localises to the cytoplasmic vesicle. It is found in the secretory vesicle. The protein resides in the synaptic vesicle membrane. The protein localises to the clathrin-coated vesicle membrane. Subunit of the V1 complex of vacuolar(H+)-ATPase (V-ATPase), a multisubunit enzyme composed of a peripheral complex (V1) that hydrolyzes ATP and a membrane integral complex (V0) that translocates protons. V-ATPase is responsible for acidifying and maintaining the pH of intracellular compartments and in some cell types, is targeted to the plasma membrane, where it is responsible for acidifying the extracellular environment. Subunit C is necessary for the assembly of the catalytic sector of the enzyme and is likely to have a specific function in its catalytic activity. The sequence is that of V-type proton ATPase subunit C 1 (Atp6v1c1) from Rattus norvegicus (Rat).